We begin with the raw amino-acid sequence, 815 residues long: Protein-glutamine gamma-glutamyltransferase K (815 aa).

Disordered regions lie at residues 1–40 (MDGPRSDVGRWGGNPWQPPTTPSPEPEPEPEPERRSRRGG) and 59–100 (DDWG…AAGD). Residues 16–25 (WQPPTTPSPE) are compositionally biased toward pro residues. Phosphothreonine is present on Thr21. Phosphoserine occurs at positions 23, 80, 83, 90, and 93. The span at 59 to 87 (DDWGPEPHRDRGSGSGRRRPDSRGSDSRR) shows a compositional bias: basic and acidic residues. Catalysis depends on residues Cys375, His434, and Asp457. 4 residues coordinate Ca(2+): Asn497, Asp499, Glu546, and Glu551. A disordered region spans residues 795 to 815 (SNAGGNSPLGETIPMASRGGA).

The protein belongs to the transglutaminase superfamily. Transglutaminase family. As to quaternary structure, interacts with PLAAT4. It depends on Ca(2+) as a cofactor. Palmitoylated. Post-translationally, the membrane anchorage region possesses a cluster of five cysteines within which fatty acid(s) may become thioester-linked. It is subject to phorbol ester-stimulated phosphorylation and is hypersensitive to proteolysis, which releases the enzyme in a soluble form. In terms of processing, tyrosine-phosphorylated.

Its subcellular location is the membrane. It catalyses the reaction L-glutaminyl-[protein] + L-lysyl-[protein] = [protein]-L-lysyl-N(6)-5-L-glutamyl-[protein] + NH4(+). Catalyzes the cross-linking of proteins and the conjugation of polyamines to proteins. Responsible for cross-linking epidermal proteins during formation of the stratum corneum. Involved in cell proliferation. The polypeptide is Protein-glutamine gamma-glutamyltransferase K (TGM1) (Canis lupus familiaris (Dog)).